The chain runs to 902 residues: Cytosolic 10-formyltetrahydrofolate dehydrogenase (902 aa).

The interval Met1 to Ala310 is hydrolase domain. Phosphoserine is present on Ser9. Lys38 bears the N6-succinyllysine mark. Residue Gln88–Ile90 coordinates (6R)-10-formyltetrahydrofolate. His106 (proton donor) is an active-site residue. A (6R)-10-formyltetrahydrofolate-binding site is contributed by Asp142. A Carrier domain is found at Glu318–Leu395. The residue at position 354 (Ser354) is an O-(pantetheine 4'-phosphoryl)serine. Residues Thr417–Tyr902 are aldehyde dehydrogenase domain. NADP(+)-binding positions include Ile571–Trp573 and Lys597–Gln600. A phosphoserine mark is found at Ser629 and Ser631. NADP(+) contacts are provided by residues Gly630–Gln635 and Gly650–Ser651. N6-succinyllysine is present on Lys660. Catalysis depends on Glu673, which acts as the Proton acceptor. Glu673–Leu674 contacts NADP(+). Cys707 functions as the Proton donor in the catalytic mechanism. Lys757 serves as a coordination point for NADP(+). Lys767 carries the post-translational modification N6-succinyllysine. Glu804–Phe806 serves as a coordination point for NADP(+). The residue at position 825 (Ser825) is a Phosphoserine. Lys882 is modified (N6-acetyllysine).

The protein in the N-terminal section; belongs to the GART family. This sequence in the C-terminal section; belongs to the aldehyde dehydrogenase family. ALDH1L subfamily. As to quaternary structure, homotetramer. Phosphopantetheinylation at Ser-354 by AASDHPPT is required for the formyltetrahydrofolate dehydrogenase activity. As to expression, highly expressed in liver, pancreas and kidney.

It localises to the cytoplasm. The protein localises to the cytosol. It catalyses the reaction (6R)-10-formyltetrahydrofolate + NADP(+) + H2O = (6S)-5,6,7,8-tetrahydrofolate + CO2 + NADPH + H(+). Cytosolic 10-formyltetrahydrofolate dehydrogenase that catalyzes the NADP(+)-dependent conversion of 10-formyltetrahydrofolate to tetrahydrofolate and carbon dioxide. May also have an NADP(+)-dependent aldehyde dehydrogenase activity towards formaldehyde, acetaldehyde, propionaldehyde, and benzaldehyde. The polypeptide is Cytosolic 10-formyltetrahydrofolate dehydrogenase (Homo sapiens (Human)).